The following is a 474-amino-acid chain: MGICRLTKKDIEGILHILGGIIQIIGIFTLVPCIVSVYYNENTFLNFLIPGLFFSIFGFVLKRATKPKNLKLHHTMVASALAWLIASFIGAIPLYLSIDYFSYVDAVYESMSAWTTTGMTLIPNVEVLPKSILFWRSFQQWIGGVGILVLSALVLARSGTVAYLLYTSEARQERIMPSAIGTIKTIIWIYILYTILGVLLLYLSGLSFWDALNLTMTGISTGGMSISNYSFPYNDFAKIVMIGIMMVGGVMSFSIHHKLLTGKYFNDIQTKYALIVTAFISIIISIKDKVPIIDSLFTVVSAMTSTGFTTINVGNLSSLSLFLIIFLMLIGGGAGTTTGGVKIIRFLVILKALLYEIKEIIYPKSAVIHEHLDDMDLNYRIIREAFVVFFLYCLSSFLTALIFIALGYNPYDSIFDAVSFTSNIGISLGVVTLKTPVIGKIAGIIAMWIGRLEIIPVLVLFATLYFKTLRLLKK.

10 helical membrane passes run 17–39 (ILGG…SVYY), 44–61 (FLNF…GFVL), 81–103 (LAWL…YFSY), 144–166 (GVGI…YLLY), 186–208 (IIWI…GLSF), 239–256 (IVMI…FSIH), 268–286 (IQTK…IISI), 319–341 (LSLF…TGGV), 385–407 (AFVV…IALG), and 444–466 (IIAM…TLYF).

Belongs to the TrkH potassium transport family.

It is found in the cell membrane. This is an uncharacterized protein from Methanocaldococcus jannaschii (strain ATCC 43067 / DSM 2661 / JAL-1 / JCM 10045 / NBRC 100440) (Methanococcus jannaschii).